The sequence spans 196 residues: UPF0301 protein BF2109 (196 aa).

It belongs to the UPF0301 (AlgH) family.

The protein is UPF0301 protein BF2109 of Bacteroides fragilis (strain ATCC 25285 / DSM 2151 / CCUG 4856 / JCM 11019 / LMG 10263 / NCTC 9343 / Onslow / VPI 2553 / EN-2).